A 193-amino-acid polypeptide reads, in one-letter code: Homeobox protein HD-12 (193 aa).

A DNA-binding region (homeobox; TALE-type) is located at residues 123–185 (SVIRRINFPK…NARRRILPFM (63 aa)).

It belongs to the TALE/KNOX homeobox family.

It localises to the nucleus. The polypeptide is Homeobox protein HD-12 (HD-12) (Encephalitozoon cuniculi (strain GB-M1) (Microsporidian parasite)).